The sequence spans 483 residues: Regulatory protein ViaA (483 aa).

This sequence belongs to the ViaA family. Homodimer. Interacts with RavA.

Its subcellular location is the cytoplasm. Functionally, component of the RavA-ViaA chaperone complex, which may act on the membrane to optimize the function of some of the respiratory chains. ViaA stimulates the ATPase activity of RavA. The polypeptide is Regulatory protein ViaA (Escherichia coli O1:K1 / APEC).